Here is a 146-residue protein sequence, read N- to C-terminus: Large ribosomal subunit protein uL22 (146 aa).

Residues 1–39 are disordered; it reads MAETQTTTPKKKAERRAPPPARARKNRPAAPAPGPHASL.

It belongs to the universal ribosomal protein uL22 family. In terms of assembly, part of the 50S ribosomal subunit.

Functionally, this protein binds specifically to 23S rRNA; its binding is stimulated by other ribosomal proteins, e.g. L4, L17, and L20. It is important during the early stages of 50S assembly. It makes multiple contacts with different domains of the 23S rRNA in the assembled 50S subunit and ribosome. The globular domain of the protein is located near the polypeptide exit tunnel on the outside of the subunit, while an extended beta-hairpin is found that lines the wall of the exit tunnel in the center of the 70S ribosome. The polypeptide is Large ribosomal subunit protein uL22 (Anaeromyxobacter dehalogenans (strain 2CP-1 / ATCC BAA-258)).